A 467-amino-acid polypeptide reads, in one-letter code: Acid phosphatase PHO12 (467 aa).

The signal sequence occupies residues 1–17 (MLKSAVYSILAASLVNA). H75 functions as the Nucleophile in the catalytic mechanism. N97, N162, N192, N250, and N315 each carry an N-linked (GlcNAc...) asparagine glycan. D338 functions as the Proton donor in the catalytic mechanism. N-linked (GlcNAc...) asparagine glycans are attached at residues N356, N390, N439, N445, and N461.

The protein belongs to the histidine acid phosphatase family. In terms of processing, glycosylated during secretion across the membrane.

It catalyses the reaction a phosphate monoester + H2O = an alcohol + phosphate. This chain is Acid phosphatase PHO12 (PHO12), found in Saccharomyces cerevisiae (strain ATCC 204508 / S288c) (Baker's yeast).